The primary structure comprises 745 residues: Cellulose synthase 1 catalytic subunit [UDP-forming] (745 aa).

The next 3 membrane-spanning stretches (helical) occupy residues 29–49, 106–126, and 153–173; these read YVVG…TLSL, GILG…LFLS, and IFIP…LGAL. The segment at 147-240 is catalytic subdomain A; the sequence is EWPTVDIFIP…HILILDCDHI (94 aa). The active site involves aspartate 189. Substrate-binding residues include aspartate 236 and aspartate 238. Positions 317-377 are catalytic subdomain B; sequence KAIEEIGGFA…GQRMRWARGM (61 aa). Aspartate 333 is a catalytic residue. 6 consecutive transmembrane segments (helical) span residues 407–427, 430–450, 468–488, 515–535, 547–567, and 649–669; these read FFFA…LFFS, IIAA…FHSI, VYET…MLFP, NIIF…ALIF, ALNC…ISVG, and AVFT…RFVF. A PilZ domain is found at 572-670; it reads QLRQSHRIEA…EAAVVRFVFG (99 aa). The span at 708–717 shows a compositional bias: basic residues; the sequence is IAHSRPKKKP. The segment at 708–745 is disordered; the sequence is IAHSRPKKKPIALPVERREPTTSQGGQKQEGKISRAAS. Residues 736-745 show a composition bias toward basic and acidic residues; sequence QEGKISRAAS.

This sequence belongs to the glycosyltransferase 2 family. Requires Mg(2+) as cofactor.

It localises to the cell inner membrane. The catalysed reaction is [(1-&gt;4)-beta-D-glucosyl](n) + UDP-alpha-D-glucose = [(1-&gt;4)-beta-D-glucosyl](n+1) + UDP + H(+). It functions in the pathway glycan metabolism; bacterial cellulose biosynthesis. Activated by bis-(3'-5') cyclic diguanylic acid (c-di-GMP). In terms of biological role, catalytic subunit of cellulose synthase. It polymerizes uridine 5'-diphosphate glucose to cellulose. The thick cellulosic mats generated by this enzyme probably provide a specialized protective environment to the bacterium. The protein is Cellulose synthase 1 catalytic subunit [UDP-forming] (bcsAI) of Komagataeibacter xylinus (Gluconacetobacter xylinus).